We begin with the raw amino-acid sequence, 314 residues long: Olfactory receptor 52B4 (314 aa).

The Extracellular segment spans residues 1-27 (MPTVNHSGTSHTVFHLLGIPGLQDQHM). N-linked (GlcNAc...) asparagine glycosylation occurs at Asn-5. The helical transmembrane segment at 28–48 (WISIPFFISYVTALLGNSLLI) threads the bilayer. The Cytoplasmic segment spans residues 49-56 (FIILTKRS). The helical transmembrane segment at 57 to 77 (LHEPMYLFLCMLAGADIVLST) threads the bilayer. The Extracellular segment spans residues 78-101 (CTIPQALAIFWFRAGDISLDRCIT). An intrachain disulfide couples Cys-99 to Cys-191. Residues 102–122 (QLFFIHSTFISESGILLVMAF) traverse the membrane as a helical segment. At 123–141 (DHYIAICYPLRYTTILTNA) the chain is on the cytoplasmic side. A helical transmembrane segment spans residues 142 to 162 (LIKKICVTVSLRSYGTIFPII). The Extracellular portion of the chain corresponds to 163–198 (FLLKRLTFCQNNIIPHTFCEHIGLAKYACNDIRINI). The chain crosses the membrane as a helical span at residues 199-219 (WYGFSILMSTVVLDVVLIFIS). At 220 to 239 (YMLILHAVFHMPSPDACHKA) the chain is on the cytoplasmic side. A helical transmembrane segment spans residues 240-260 (LNTFGSHVCIIILFYGSGIFT). At 261–275 (ILTQRFGRHIPPCIH) the chain is on the extracellular side. A helical membrane pass occupies residues 276 to 296 (IPLANVCILAPPMLNPIIYGI). Over 297-314 (KTKQIQEQVVQFLFIKQK) the chain is Cytoplasmic.

The protein belongs to the G-protein coupled receptor 1 family.

The protein localises to the cell membrane. Its function is as follows. Odorant receptor. The sequence is that of Olfactory receptor 52B4 (OR52B4) from Homo sapiens (Human).